The sequence spans 385 residues: Pectate lyase E (385 aa).

The signal sequence occupies residues 1–30; it reads MKNTRVRSIGTKSLLAAVVTAALMATSAYA. A Ca(2+)-binding site is contributed by Asp-164. Repeat unit 1 spans residues 177–182; sequence DHVTIS. The interval 177–218 is 2 X 6 AA approximate repeats; the sequence is DHVTISDGSFTDDKYTTKDGEKYVQHDGALDIKKGSDYVTIS. Asp-207 lines the Ca(2+) pocket. The stretch at 213 to 218 is repeat 2; it reads DYVTIS. Arg-260 is an active-site residue.

It belongs to the polysaccharide lyase 1 family. PLBC subfamily. Ca(2+) is required as a cofactor.

The protein localises to the secreted. It catalyses the reaction Eliminative cleavage of (1-&gt;4)-alpha-D-galacturonan to give oligosaccharides with 4-deoxy-alpha-D-galact-4-enuronosyl groups at their non-reducing ends.. Its pathway is glycan metabolism; pectin degradation; 2-dehydro-3-deoxy-D-gluconate from pectin: step 2/5. Involved in maceration and soft-rotting of plant tissue. This is Pectate lyase E (pelE) from Dickeya chrysanthemi (Pectobacterium chrysanthemi).